The following is a 358-amino-acid chain: Ferredoxin--NADP reductase (358 aa).

Positions 38, 46, 51, 91, 126, 301, and 341 each coordinate FAD.

It belongs to the ferredoxin--NADP reductase type 2 family. Homodimer. FAD serves as cofactor.

It carries out the reaction 2 reduced [2Fe-2S]-[ferredoxin] + NADP(+) + H(+) = 2 oxidized [2Fe-2S]-[ferredoxin] + NADPH. This Paracidovorax citrulli (strain AAC00-1) (Acidovorax citrulli) protein is Ferredoxin--NADP reductase.